The following is a 285-amino-acid chain: 4-diphosphocytidyl-2-C-methyl-D-erythritol kinase (285 aa).

Lys-12 is an active-site residue. 95-105 (PMGGGVGGGSS) contacts ATP. The active site involves Asp-137.

Belongs to the GHMP kinase family. IspE subfamily.

The catalysed reaction is 4-CDP-2-C-methyl-D-erythritol + ATP = 4-CDP-2-C-methyl-D-erythritol 2-phosphate + ADP + H(+). It participates in isoprenoid biosynthesis; isopentenyl diphosphate biosynthesis via DXP pathway; isopentenyl diphosphate from 1-deoxy-D-xylulose 5-phosphate: step 3/6. Functionally, catalyzes the phosphorylation of the position 2 hydroxy group of 4-diphosphocytidyl-2C-methyl-D-erythritol. The polypeptide is 4-diphosphocytidyl-2-C-methyl-D-erythritol kinase (Actinobacillus pleuropneumoniae serotype 7 (strain AP76)).